A 139-amino-acid polypeptide reads, in one-letter code: UPF0102 protein Caul_0175 (139 aa).

It belongs to the UPF0102 family.

This Caulobacter sp. (strain K31) protein is UPF0102 protein Caul_0175.